The sequence spans 54 residues: Potassium channel toxin alpha-KTx 14.5 (54 aa).

The signal sequence occupies residues M1–G23. Cystine bridges form between C30–C46, C36–C51, and C40–C53.

This sequence belongs to the short scorpion toxin superfamily. Potassium channel inhibitor family. Alpha-KTx 14 subfamily. In terms of tissue distribution, expressed by the venom gland.

The protein resides in the secreted. Functionally, inhibits potassium channels. May be active towards small conductance calcium-activated potassium channels (KCNN, SK), and less active towards voltage-gated potassium channels (Kv/KCN). This is Potassium channel toxin alpha-KTx 14.5 from Mesobuthus gibbosus (Mediterranean checkered scorpion).